The following is a 243-amino-acid chain: 1-(5-phosphoribosyl)-5-[(5-phosphoribosylamino)methylideneamino] imidazole-4-carboxamide isomerase (243 aa).

Catalysis depends on D8, which acts as the Proton acceptor. Residue D130 is the Proton donor of the active site.

The protein belongs to the HisA/HisF family.

It localises to the cytoplasm. It catalyses the reaction 1-(5-phospho-beta-D-ribosyl)-5-[(5-phospho-beta-D-ribosylamino)methylideneamino]imidazole-4-carboxamide = 5-[(5-phospho-1-deoxy-D-ribulos-1-ylimino)methylamino]-1-(5-phospho-beta-D-ribosyl)imidazole-4-carboxamide. Its pathway is amino-acid biosynthesis; L-histidine biosynthesis; L-histidine from 5-phospho-alpha-D-ribose 1-diphosphate: step 4/9. The sequence is that of 1-(5-phosphoribosyl)-5-[(5-phosphoribosylamino)methylideneamino] imidazole-4-carboxamide isomerase from Cellvibrio japonicus (strain Ueda107) (Pseudomonas fluorescens subsp. cellulosa).